The chain runs to 85 residues: Mitochondrial protein pet191 homolog (85 aa).

Residues 18 to 61 (HSDCMFVKKKSARECLKNKDELPEECKNLIEAYGECKRQMLDMT) form the CHCH domain. A Cx10C motif motif is present at residues 21–32 (CMFVKKKSAREC). Disulfide bonds link Cys21-Cys53 and Cys32-Cys43. The short motif at 43-53 (CKNLIEAYGEC) is the Cx9C motif element. Residues 65-85 (RIAPEKNTDQDTEKPSNVDEQ) form a disordered region.

It belongs to the PET191 family.

Its subcellular location is the mitochondrion. Functionally, involved in the assembly of cytochrome c oxidase. This Schizosaccharomyces pombe (strain 972 / ATCC 24843) (Fission yeast) protein is Mitochondrial protein pet191 homolog.